Here is a 705-residue protein sequence, read N- to C-terminus: Ribosomal RNA large subunit methyltransferase K/L (705 aa).

A THUMP domain is found at 43-154 (VVYRCCLWSR…GEKGILGFDL (112 aa)).

The protein belongs to the methyltransferase superfamily. RlmKL family.

The protein resides in the cytoplasm. The enzyme catalyses guanosine(2445) in 23S rRNA + S-adenosyl-L-methionine = N(2)-methylguanosine(2445) in 23S rRNA + S-adenosyl-L-homocysteine + H(+). The catalysed reaction is guanosine(2069) in 23S rRNA + S-adenosyl-L-methionine = N(2)-methylguanosine(2069) in 23S rRNA + S-adenosyl-L-homocysteine + H(+). Functionally, specifically methylates the guanine in position 2445 (m2G2445) and the guanine in position 2069 (m7G2069) of 23S rRNA. The chain is Ribosomal RNA large subunit methyltransferase K/L from Aliivibrio salmonicida (strain LFI1238) (Vibrio salmonicida (strain LFI1238)).